The following is a 324-amino-acid chain: MNILEYAPIACQSWQVTVVGAGNVGRTLAQRLVQQNVANVVLLDIVPGLPQGIALDLMAAQSVEEYDSKIIGTNEYEATAGSDVVVITAGLPRRPGMSRDDLLGKNANIVAQGAREALRYSPNAILIVVTNPLDVMTYLAWKVTGLPSQRVMGMAGVLDSARLKAFIAMKLGACPSDINTLVLGGHGDLMLPLPRYCTVSGVPITELIPPQTIEELVERTRNGGAEIAALLQTGTAYYAPASSAAVMVESILRNQSRILPAATYLDGAYGLKDIFLGVPCRLGCRGVEDILEVQLTPEEKAALHLSAEAVRLNIDVALAMVSDG.

NAD(+) is bound by residues 20–25 and aspartate 44; that span reads GAGNVG. Substrate is bound by residues arginine 93 and arginine 99. NAD(+) contacts are provided by residues asparagine 106 and 129-131; that span reads VTN. The substrate site is built by asparagine 131 and arginine 162. The active-site Proton acceptor is the histidine 186.

Belongs to the LDH/MDH superfamily. MDH type 3 family.

The enzyme catalyses (S)-malate + NAD(+) = oxaloacetate + NADH + H(+). In terms of biological role, catalyzes the reversible oxidation of malate to oxaloacetate. This chain is Malate dehydrogenase, found in Synechocystis sp. (strain ATCC 27184 / PCC 6803 / Kazusa).